Reading from the N-terminus, the 179-residue chain is Ribosome maturation factor RimM (179 aa).

A PRC barrel domain is found at 95-174; the sequence is KDEFFYFDIL…QIFCTQDAFL (80 aa).

The protein belongs to the RimM family. In terms of assembly, binds ribosomal protein uS19.

It localises to the cytoplasm. An accessory protein needed during the final step in the assembly of 30S ribosomal subunit, possibly for assembly of the head region. Essential for efficient processing of 16S rRNA. May be needed both before and after RbfA during the maturation of 16S rRNA. It has affinity for free ribosomal 30S subunits but not for 70S ribosomes. The protein is Ribosome maturation factor RimM of Campylobacter jejuni subsp. jejuni serotype O:2 (strain ATCC 700819 / NCTC 11168).